The chain runs to 310 residues: uncharacterized protein (310 aa).

9 consecutive transmembrane segments (helical) span residues 1-21, 38-58, 74-94, 110-130, 135-155, 194-214, 228-248, 256-276, and 284-304; these read MIYFFISSLFFLILITLMFSK, FFFYFLLFVLFIFIFWLVVYT, TSYFLEILLSIDNVFAWFFIF, YGLWGALILRSIFSFSGSFLF, WILYLFGGFFILTSLKFIFFS, IFITPLFVSLILIELSDIVFS, LFIIFSSNFFAVLGLRSMYLF, FPIMKYALSLILMFIGFKILI, and IFLTLAVILIILITTFLINLI.

It belongs to the TerC family.

It is found in the cell membrane. This is an uncharacterized protein from Buchnera aphidicola subsp. Schizaphis graminum (strain Sg).